Consider the following 368-residue polypeptide: MRPVWAEVNLENIRHNFREVKRLARQAEAMPVIKANAYGHGAVEVAKALIAEGAKRFAVAILDEGIKLREAGIDAPVLILGYTPPEEVEKLLFYNLTPTLHHRELALAYQERLERLKKTLFYHLKIDTGMGRIGFWYEELEKIEEVLKLKNLEAEGVYTHFARADEQDLSFSKLQIERFNIVLKHLKAKGIEVKYRHAANSAAIMRLPEAHYDLVRPGIMLYGEYPSRDVPRELAHLKPALTLKARVSQVKKVPAGFTVSYGSTYVTSKATLIVSLPLGYADGYFRRLSNRGVVLINGKRWSIAGRVCMDQLMVAVDETERVNPGDEAVLLGKQGEETITAMEMADLVGTINYEILTNISYRVPRIYV.

K34 serves as the catalytic Proton acceptor; specific for D-alanine. K34 is modified (N6-(pyridoxal phosphate)lysine). R132 is a substrate binding site. The active-site Proton acceptor; specific for L-alanine is the Y261. Residue M309 coordinates substrate.

This sequence belongs to the alanine racemase family. Pyridoxal 5'-phosphate is required as a cofactor.

The catalysed reaction is L-alanine = D-alanine. The protein operates within amino-acid biosynthesis; D-alanine biosynthesis; D-alanine from L-alanine: step 1/1. Its function is as follows. Catalyzes the interconversion of L-alanine and D-alanine. May also act on other amino acids. This is Alanine racemase (alr) from Carboxydothermus hydrogenoformans (strain ATCC BAA-161 / DSM 6008 / Z-2901).